The sequence spans 189 residues: Probable nicotinate-nucleotide adenylyltransferase (189 aa).

The protein belongs to the NadD family.

It carries out the reaction nicotinate beta-D-ribonucleotide + ATP + H(+) = deamido-NAD(+) + diphosphate. It participates in cofactor biosynthesis; NAD(+) biosynthesis; deamido-NAD(+) from nicotinate D-ribonucleotide: step 1/1. Functionally, catalyzes the reversible adenylation of nicotinate mononucleotide (NaMN) to nicotinic acid adenine dinucleotide (NaAD). The chain is Probable nicotinate-nucleotide adenylyltransferase from Bacillus cereus (strain ATCC 10987 / NRS 248).